Here is a 329-residue protein sequence, read N- to C-terminus: Transcription factor TGA2.3 (329 aa).

Residues 1 to 48 (MADMSPRTDTSTDDTDDNHMLEPGQLALAAASDSDRSKDKHEDQKTLR) form a disordered region. Positions 33 to 46 (DSDRSKDKHEDQKT) are enriched in basic and acidic residues. In terms of domain architecture, bZIP spans 43-87 (DQKTLRRLAQNREAARKSRLRKKAYVQQLENSRLKLTQLEQELQR). The interval 45–65 (KTLRRLAQNREAARKSRLRKK) is basic motif. The leucine-zipper stretch occupies residues 71 to 85 (LENSRLKLTQLEQEL). In terms of domain architecture, DOG1 spans 110–326 (ALAFDMEYAR…RALSSLWLAR (217 aa)).

The protein belongs to the bZIP family. Interacts with NPR1/NH1 and NPR3/NH3.

It is found in the nucleus. Functionally, transcriptional regulator involved in defense response. This Oryza sativa subsp. japonica (Rice) protein is Transcription factor TGA2.3.